The chain runs to 102 residues: Protein 108 (102 aa).

Positions 1–30 are cleaved as a signal peptide; it reads MASVKSSSSSSSSSFISLLLLILLVIVLQS. 4 cysteine pairs are disulfide-bonded: Cys-41/Cys-77, Cys-51/Cys-66, Cys-67/Cys-92, and Cys-79/Cys-99.

It belongs to the A9/FIL1 family. As to expression, stamen- and tapetum-specific.

It localises to the secreted. The chain is Protein 108 from Solanum lycopersicum (Tomato).